A 348-amino-acid polypeptide reads, in one-letter code: Isopentenyl-diphosphate delta-isomerase (348 aa).

Arginine 14–lysine 15 is a binding site for substrate. FMN is bound by residues serine 72, serine 73 to threonine 75, serine 103, and asparagine 131. Serine 103–arginine 105 contacts substrate. Glutamine 166 contributes to the substrate binding site. A Mg(2+)-binding site is contributed by glutamate 167. FMN is bound by residues lysine 198, threonine 228, glycine 278 to arginine 280, and alanine 299 to arginine 300.

The protein belongs to the IPP isomerase type 2 family. In terms of assembly, homooctamer. Dimer of tetramers. The cofactor is FMN. NADPH serves as cofactor. Requires Mg(2+) as cofactor.

The protein resides in the cytoplasm. It carries out the reaction isopentenyl diphosphate = dimethylallyl diphosphate. Functionally, involved in the biosynthesis of isoprenoids. Catalyzes the 1,3-allylic rearrangement of the homoallylic substrate isopentenyl (IPP) to its allylic isomer, dimethylallyl diphosphate (DMAPP). The chain is Isopentenyl-diphosphate delta-isomerase from Synechococcus sp. (strain ATCC 27144 / PCC 6301 / SAUG 1402/1) (Anacystis nidulans).